A 37-amino-acid polypeptide reads, in one-letter code: Mating pheromone Er-20 (37 aa).

3 disulfides stabilise this stretch: C3-C18, C10-C32, and C15-C24.

In terms of assembly, homodimer.

The protein localises to the secreted. Mating ciliate pheromones (or gamones) are diffusible extracellular communication signals that distinguish different intraspecific classes of cells commonly referred to as 'mating types'. They prepare the latter for conjugation by changing their cell surface properties. The protein is Mating pheromone Er-20 (MAT20) of Euplotes raikovi.